Consider the following 329-residue polypeptide: Beta-ketoacyl-[acyl-carrier-protein] synthase III (329 aa).

Active-site residues include cysteine 113 and histidine 255. The ACP-binding stretch occupies residues 256–260 (QANQR). Asparagine 285 is a catalytic residue.

The protein belongs to the thiolase-like superfamily. FabH family. Homodimer.

Its subcellular location is the cytoplasm. It carries out the reaction malonyl-[ACP] + acetyl-CoA + H(+) = 3-oxobutanoyl-[ACP] + CO2 + CoA. It participates in lipid metabolism; fatty acid biosynthesis. In terms of biological role, catalyzes the condensation reaction of fatty acid synthesis by the addition to an acyl acceptor of two carbons from malonyl-ACP. Catalyzes the first condensation reaction which initiates fatty acid synthesis and may therefore play a role in governing the total rate of fatty acid production. Possesses both acetoacetyl-ACP synthase and acetyl transacylase activities. Its substrate specificity determines the biosynthesis of branched-chain and/or straight-chain of fatty acids. This Chlorobium phaeobacteroides (strain DSM 266 / SMG 266 / 2430) protein is Beta-ketoacyl-[acyl-carrier-protein] synthase III.